A 398-amino-acid polypeptide reads, in one-letter code: Selection and upkeep of intraepithelial T-cells protein 8 (398 aa).

A signal peptide spans 1–25 (MMKPEFSHFFGFCVYFLFLQVMASS). The region spanning 26–141 (EKLRVTTPTR…DVAIMNLNVT (116 aa)) is the Ig-like V-type domain. Over 26–244 (EKLRVTTPTR…ANELFNQDYL (219 aa)) the chain is Extracellular. A disulfide bond links cysteine 49 and cysteine 123. N-linked (GlcNAc...) asparagine glycans are attached at residues asparagine 92 and asparagine 139. Residues 142-233 (AVGLETEIHV…TGEEKQTSII (92 aa)) form the Ig-like C1-type domain. The cysteines at positions 163 and 217 are disulfide-linked. Residues 245-265 (WVGIFPFSVLSLILFGVLPFI) form a helical membrane-spanning segment. The Cytoplasmic portion of the chain corresponds to 266–288 (NSFFRSQGCASGCLSKCLPVVTS). Residues 289–309 (WPVQIVHFLVCSGVLFAVYLP) form a helical membrane-spanning segment. Over 310–331 (HRYRVSLSDPQFPLYNNWITEL) the chain is Extracellular. A helical transmembrane segment spans residues 332-352 (LIVILFLTICFVLPITVLLLI). The Cytoplasmic segment spans residues 353 to 398 (KLSPTCLAKWEKNKDDIMDSQLGLGKAREASTLYEEQSRKSWEQEK).

The protein belongs to the SKINT family. In terms of tissue distribution, expressed in skin, thymus, testis and, to a lower extent, bladder, brain, heart, kidney, mammary gland, small intestine and uterus.

It localises to the membrane. Its function is as follows. May act by engaging a cell surface molecule on immature T-cells in the embryonic thymus. This Mus musculus (Mouse) protein is Selection and upkeep of intraepithelial T-cells protein 8 (Skint8).